Here is a 1599-residue protein sequence, read N- to C-terminus: Protein TOPAZ1 (1599 aa).

4 disordered regions span residues 1 to 42 (MVAQ…KESL), 159 to 185 (GCMH…TDPS), 802 to 836 (PNVA…VPDP), and 867 to 889 (VTHE…SSDL). 2 stretches are compositionally biased toward basic and acidic residues: residues 168–183 (SKSK…DKTD) and 805–832 (AEEH…RELP). Polar residues predominate over residues 874 to 884 (NEKPGGLSEQT).

As to expression, expressed in both adult testis and fetal ovary, mostly in germ cells (at protein level).

The protein resides in the cytoplasm. It localises to the cytosol. Its function is as follows. Important for normal spermatogenesis and male fertility. Specifically required for progression to the post-meiotic stages of spermatocyte development. Seems to be necessary for normal expression levels of a number of testis-expressed gene transcripts, although its role in this process is unclear. This chain is Protein TOPAZ1 (TOPAZ1), found in Ovis aries (Sheep).